The sequence spans 120 residues: SAGA-associated factor 11 (120 aa).

Residues 40–60 (SLLNSSNSNTNSNTNGTIASN) show a composition bias toward low complexity. The tract at residues 40–82 (SLLNSSNSNTNSNTNGTIASNGGNGTTSDENNEIENSTIQDKS) is disordered. The SGF11-type zinc finger occupies 93 to 114 (FRCLNCGRNIAGGRFASHISKC).

Belongs to the SGF11 family. As to quaternary structure, component of the 1.8 MDa SAGA transcription coactivator-HAT complex. SAGA is built of 5 distinct domains with specialized functions. Within the SAGA complex, SUS1, SGF11, SGF73 and UBP8 form an additional subcomplex of SAGA called the DUB module (deubiquitination module). Interacts directly with SGF73, SUS1 and UBP8.

The protein resides in the nucleus. Functions as a component of the transcription regulatory histone acetylation (HAT) complex SAGA. At the promoters, SAGA is required for recruitment of the basal transcription machinery. It influences RNA polymerase II transcriptional activity through different activities such as TBP interaction and promoter selectivity, interaction with transcription activators, and chromatin modification through histone acetylation and deubiquitination. SAGA acetylates nucleosomal histone H3 to some extent (to form H3K9ac, H3K14ac, H3K18ac and H3K23ac). SAGA interacts with DNA via upstream activating sequences (UASs). Involved in transcriptional regulation of a subset of SAGA-regulated genes. Within the SAGA complex, participates in a subcomplex, that specifically deubiquitinates histones H2B. This Candida albicans (strain SC5314 / ATCC MYA-2876) (Yeast) protein is SAGA-associated factor 11.